Here is a 1650-residue protein sequence, read N- to C-terminus: Transmembrane domain-containing protein DDB_G0287209 (1650 aa).

Residues 194–225 (NNNNNNFNNNNNNNNNNNNNKNNYNNNKSNLI) are a coiled coil. Disordered regions lie at residues 197–216 (NNNFNNNNNNNNNNNNNKNN) and 1218–1296 (ENQF…NINN). Positions 1224–1284 (NNNENSGSSG…SNSNENNYNG (61 aa)) are enriched in low complexity. Transmembrane regions (helical) follow at residues 1314–1334 (PLLLIPFIFWILFFGLFLSLF), 1347–1369 (ILFLQLNSIVFYPLPNIYGLQLF), 1390–1410 (ISISLISIFLIYLIGISDVTS), 1454–1474 (WNIYLMLIQPLFHCLISLIVP), 1489–1509 (ILFISTPIQIVFFFSSIVILF), 1515–1535 (WWDLIFVFKTILFTSLSVTLL), 1539–1559 (PVYFSALVICQIVYSYSQFAF), 1570–1590 (VENLLNLFQLSILIVINTSII), and 1595–1615 (FNLIGILFTIVIFSCSLITII).

The protein localises to the membrane. This is Transmembrane domain-containing protein DDB_G0287209 from Dictyostelium discoideum (Social amoeba).